A 167-amino-acid polypeptide reads, in one-letter code: Adenylylsulfate reductase subunit beta (167 aa).

4Fe-4S ferredoxin-type domains follow at residues 1–35 (MPTF…LDPE) and 38–67 (KAFN…ARPY). Residues Cys-10, Cys-13, Cys-21, Cys-25, Cys-47, Cys-50, Cys-53, and Cys-57 each coordinate [4Fe-4S] cluster.

Heterodimer composed of AprA and AprB. The heterodimers can dimerize to form heterotetramers. It depends on [4Fe-4S] cluster as a cofactor.

It localises to the cytoplasm. Its function is as follows. Iron-sulfur cluster subunit of the adenylylsulfate reductase which catalyzes reversibly the reduction of adenosine 5'-phosphosulfate (APS) to sulfite and AMP during dissimilatory sulfate reduction. The iron-sulfur cluster 2 is thought to accept electrons from a still unknown electron donor and transfer electrons to the iron-sulfur cluster 1 of this protein and then onto the FAD of AprA. The polypeptide is Adenylylsulfate reductase subunit beta (Megalodesulfovibrio gigas (strain ATCC 19364 / DSM 1382 / NCIMB 9332 / VKM B-1759) (Desulfovibrio gigas)).